Consider the following 155-residue polypeptide: Ribosome maturation factor RimP (155 aa).

The protein belongs to the RimP family.

Its subcellular location is the cytoplasm. Its function is as follows. Required for maturation of 30S ribosomal subunits. The chain is Ribosome maturation factor RimP from Staphylococcus haemolyticus (strain JCSC1435).